The primary structure comprises 353 residues: Protein RecA (353 aa).

73-80 serves as a coordination point for ATP; it reads GPESSGKT.

The protein belongs to the RecA family.

The protein resides in the cytoplasm. Can catalyze the hydrolysis of ATP in the presence of single-stranded DNA, the ATP-dependent uptake of single-stranded DNA by duplex DNA, and the ATP-dependent hybridization of homologous single-stranded DNAs. It interacts with LexA causing its activation and leading to its autocatalytic cleavage. The polypeptide is Protein RecA (Bordetella avium (strain 197N)).